A 481-amino-acid chain; its full sequence is ATP synthase subunit beta (481 aa).

167-174 provides a ligand contact to ATP; it reads GGAGVGKT.

The protein belongs to the ATPase alpha/beta chains family. F-type ATPases have 2 components, CF(1) - the catalytic core - and CF(0) - the membrane proton channel. CF(1) has five subunits: alpha(3), beta(3), gamma(1), delta(1), epsilon(1). CF(0) has three main subunits: a(1), b(2) and c(9-12). The alpha and beta chains form an alternating ring which encloses part of the gamma chain. CF(1) is attached to CF(0) by a central stalk formed by the gamma and epsilon chains, while a peripheral stalk is formed by the delta and b chains.

The protein localises to the cell membrane. The enzyme catalyses ATP + H2O + 4 H(+)(in) = ADP + phosphate + 5 H(+)(out). Functionally, produces ATP from ADP in the presence of a proton gradient across the membrane. The catalytic sites are hosted primarily by the beta subunits. This chain is ATP synthase subunit beta, found in Corynebacterium efficiens (strain DSM 44549 / YS-314 / AJ 12310 / JCM 11189 / NBRC 100395).